The following is a 490-amino-acid chain: MAAANLLSRALLPALNPNPSSHSNRVSPSAVSLRCRHGLTASVRASLSTAAPSPPPRPAAAAADGRAPKRCFRRGADGHLYCEGVRVEDAMGAAERTPFYLYSKPQVVRNFTAYRDALEGLRSIVGYAVKANNNLRVLQLLRELGCGAVLVSGNELRLALRAGFDPTRCIFNGNGKTLEDLVLAAESGVFVNIDSEFDLENIVTAARVAGKKVPVLLRINPDVDPQVHPYVATGNKTSKFGIRNEKLQWFLDSIKSYSNDITLVGVHCHLGSTITKVDIFRDAAGLMVNYVDEIRAQGFELEYLNIGGGLGIDYHHTDAVLPTPMDLINTVRELVLSRDLTLIIEPGRSLIANTCCFVNRVTGVKSNGTKNFIVVDGSMAELIRPSLYGAYQHIELVSPSPDAEVATFDIVGPVCESADFLGKDRELPTPDKGAGLVVHDAGAYCMSMASTYNLKLRPPEYWVEDDGSIAKIRRGESFDDYMKFFDNLSA.

The N-terminal 44 residues, 1 to 44 (MAAANLLSRALLPALNPNPSSHSNRVSPSAVSLRCRHGLTASVR), are a transit peptide targeting the chloroplast. The segment at 45–66 (ASLSTAAPSPPPRPAAAAADGR) is disordered. An N6-(pyridoxal phosphate)lysine modification is found at Lys130. Residues Gly309 and 345–348 (EPGR) contribute to the pyridoxal 5'-phosphate site. Substrate is bound by residues Arg348, Arg384, and Tyr388. Cys415 functions as the Proton donor in the catalytic mechanism. Residues Glu416 and Tyr444 each contribute to the substrate site. Position 444 (Tyr444) interacts with pyridoxal 5'-phosphate.

The protein belongs to the Orn/Lys/Arg decarboxylase class-II family. LysA subfamily. In terms of assembly, homodimer. The cofactor is pyridoxal 5'-phosphate.

It localises to the plastid. The protein localises to the chloroplast. It catalyses the reaction meso-2,6-diaminopimelate + H(+) = L-lysine + CO2. It functions in the pathway amino-acid biosynthesis; L-lysine biosynthesis via DAP pathway; L-lysine from DL-2,6-diaminopimelate: step 1/1. In terms of biological role, specifically catalyzes the decarboxylation of meso-diaminopimelate (meso-DAP) to L-lysine. The protein is Probable diaminopimelate decarboxylase, chloroplastic (LYSA) of Oryza sativa subsp. japonica (Rice).